A 60-amino-acid polypeptide reads, in one-letter code: Large ribosomal subunit protein bL32 (60 aa).

Residues 1-43 form a disordered region; that stretch reads MAVQQNKKSPSKRGMHRSHDALTNPPLAIEPTTGEIHLRHHIS.

The protein belongs to the bacterial ribosomal protein bL32 family.

The chain is Large ribosomal subunit protein bL32 from Nitrosomonas europaea (strain ATCC 19718 / CIP 103999 / KCTC 2705 / NBRC 14298).